We begin with the raw amino-acid sequence, 1331 residues long: uncharacterized protein (1331 aa).

8 consecutive transmembrane segments (helical) span residues 373-393, 487-507, 534-554, 579-599, 653-673, 1206-1226, 1255-1275, and 1297-1317; these read VIGV…SLIV, ALFL…LILI, LLIF…SFGI, VVGL…ISLL, LVFL…SFAT, VIAV…TTLI, IPLF…LIAL, and AIGS…LNWL.

It belongs to the ABC-4 integral membrane protein family.

The protein localises to the cell membrane. This is an uncharacterized protein from Mycoplasma genitalium (strain ATCC 33530 / DSM 19775 / NCTC 10195 / G37) (Mycoplasmoides genitalium).